A 78-amino-acid polypeptide reads, in one-letter code: Acyl carrier protein (78 aa).

A Carrier domain is found at 2–77; that stretch reads SDTADRVQKI…DATKYIEEHK (76 aa). Ser37 bears the O-(pantetheine 4'-phosphoryl)serine mark.

This sequence belongs to the acyl carrier protein (ACP) family. Post-translationally, 4'-phosphopantetheine is transferred from CoA to a specific serine of apo-ACP by AcpS. This modification is essential for activity because fatty acids are bound in thioester linkage to the sulfhydryl of the prosthetic group.

The protein localises to the cytoplasm. It participates in lipid metabolism; fatty acid biosynthesis. Its function is as follows. Carrier of the growing fatty acid chain in fatty acid biosynthesis. The sequence is that of Acyl carrier protein from Erythrobacter litoralis (strain HTCC2594).